The following is a 579-amino-acid chain: Protein disulfide isomerase-like 1-3 (579 aa).

An N-terminal signal peptide occupies residues 1 to 25 (MASSSTSISLLLFVSFILLLVNSRA). N27 carries N-linked (GlcNAc...) asparagine glycosylation. Composition is skewed to basic and acidic residues over residues 44–69 (EESK…RDFE) and 80–89 (EFHHGDHGYE). Residues 44–91 (EESKEQSHGGGSYHEEEHDHQHRDFENYDDLEQGGGEFHHGDHGYEEE) are disordered. A Thioredoxin 1 domain is found at 81–204 (FHHGDHGYEE…IVTWLKKKAS (124 aa)). N108 and N115 each carry an N-linked (GlcNAc...) asparagine glycan. Residues C128 and C131 each act as nucleophile in the active site. Residues C128 and C131 are joined by a disulfide bond. 4 N-linked (GlcNAc...) asparagine glycosylation sites follow: N209, N293, N313, and N338. Residues 416–546 (DFLADKLKPF…LYKFLKKHAS (131 aa)) enclose the Thioredoxin 2 domain. Residues C467 and C470 each act as nucleophile in the active site. C467 and C470 are oxidised to a cystine. N520 is a glycosylation site (N-linked (GlcNAc...) asparagine). Residues 558–579 (EPVISTMKSDEKIEGDSSKDEL) are disordered. A compositionally biased stretch (basic and acidic residues) spans 565–579 (KSDEKIEGDSSKDEL). The Prevents secretion from ER signature appears at 576–579 (KDEL).

It belongs to the protein disulfide isomerase family. As to expression, widely expressed.

It localises to the endoplasmic reticulum lumen. The catalysed reaction is Catalyzes the rearrangement of -S-S- bonds in proteins.. Acts as a protein-folding catalyst that interacts with nascent polypeptides to catalyze the formation, isomerization, and reduction or oxidation of disulfide bonds. The chain is Protein disulfide isomerase-like 1-3 (PDIL1-3) from Arabidopsis thaliana (Mouse-ear cress).